Consider the following 211-residue polypeptide: MSAIITIALSKGRILDDTLPLLAAADIEPEDDIKKSRKLIFSTNQPNVRLVVLRATDVPTYVQHGVADLGVAGKDVLMEHGYDGLYEPLDLKIATCRLMTAAMKGAAPKSGRIKVATKFVNIAKRYYAGKGIQADIIKLYGGMELAPLMGLADEIVDIVDTGNTLVANGLEPREKICDISSRLIANSASMKMKHASLQPILDKLAQAVGAE.

The protein belongs to the ATP phosphoribosyltransferase family. Short subfamily. In terms of assembly, heteromultimer composed of HisG and HisZ subunits.

The protein resides in the cytoplasm. The catalysed reaction is 1-(5-phospho-beta-D-ribosyl)-ATP + diphosphate = 5-phospho-alpha-D-ribose 1-diphosphate + ATP. It functions in the pathway amino-acid biosynthesis; L-histidine biosynthesis; L-histidine from 5-phospho-alpha-D-ribose 1-diphosphate: step 1/9. Its function is as follows. Catalyzes the condensation of ATP and 5-phosphoribose 1-diphosphate to form N'-(5'-phosphoribosyl)-ATP (PR-ATP). Has a crucial role in the pathway because the rate of histidine biosynthesis seems to be controlled primarily by regulation of HisG enzymatic activity. This chain is ATP phosphoribosyltransferase, found in Hahella chejuensis (strain KCTC 2396).